Here is a 370-residue protein sequence, read N- to C-terminus: 3-isopropylmalate dehydrogenase (370 aa).

77 to 90 (GPKWDAVPYEVRPE) is a binding site for NAD(+). Positions 97, 107, 135, and 226 each coordinate substrate. Residues D226, D250, and D254 each contribute to the Mg(2+) site. 290–302 (GSAPDIAGTGVAN) contributes to the NAD(+) binding site.

The protein belongs to the isocitrate and isopropylmalate dehydrogenases family. LeuB type 1 subfamily. Homodimer. The cofactor is Mg(2+). Requires Mn(2+) as cofactor.

It localises to the cytoplasm. It carries out the reaction (2R,3S)-3-isopropylmalate + NAD(+) = 4-methyl-2-oxopentanoate + CO2 + NADH. The protein operates within amino-acid biosynthesis; L-leucine biosynthesis; L-leucine from 3-methyl-2-oxobutanoate: step 3/4. In terms of biological role, catalyzes the oxidation of 3-carboxy-2-hydroxy-4-methylpentanoate (3-isopropylmalate) to 3-carboxy-4-methyl-2-oxopentanoate. The product decarboxylates to 4-methyl-2 oxopentanoate. In Rhizobium meliloti (strain 1021) (Ensifer meliloti), this protein is 3-isopropylmalate dehydrogenase.